The following is a 446-amino-acid chain: WEB family protein At3g56270 (446 aa).

A coiled-coil region spans residues 313–349 (TNVSRIEILRKLEEANEEVKQSKQALEVALNRVEIAS).

The protein belongs to the WEB family.

In Arabidopsis thaliana (Mouse-ear cress), this protein is WEB family protein At3g56270.